The primary structure comprises 320 residues: L-lactate dehydrogenase (320 aa).

Residues Val-18, Asp-39, Arg-44, Tyr-69, and 83 to 84 (GA) each bind NAD(+). Substrate is bound by residues Gln-86 and Arg-92. Residues Ser-105, 122 to 124 (AAN), and Ser-147 each bind NAD(+). 124 to 127 (NPVD) provides a ligand contact to substrate. 152 to 155 (DSSR) provides a ligand contact to substrate. His-179 serves as the catalytic Proton acceptor. Tyr-223 is subject to Phosphotyrosine. Thr-232 is a binding site for substrate.

This sequence belongs to the LDH/MDH superfamily. LDH family. As to quaternary structure, homotetramer.

The protein localises to the cytoplasm. It catalyses the reaction (S)-lactate + NAD(+) = pyruvate + NADH + H(+). The protein operates within fermentation; pyruvate fermentation to lactate; (S)-lactate from pyruvate: step 1/1. The quaternary structure is constitutionally similar to the active conformation of allosteric LDHs, and the regulation is independent of the fructose 1,6-bisphosphate-binding site. Functionally, catalyzes the conversion of lactate to pyruvate. The protein is L-lactate dehydrogenase of Lactiplantibacillus pentosus (Lactobacillus pentosus).